Consider the following 845-residue polypeptide: MELNVDSAKQLLAEHEQELQSAHDAHSILLASQPITAATTHPNATASNAARAVPVVAPSSVPTPTAASTPFISTQPPAPAQTGRMQLIDEQQKFNSADFSPHLENWGLADAGFGYDLCAVLGSQSTGKSTLLNKLFGTNFDVMSESARQQTTKGIWMCKGLKMNVLVMDVEGTDGRERGEDQDFERKSALFSMASAEVLIVNLWEHQVGLYQGANMGLLKTVFEVNLGLFQASRAKTAGAKDKTLLLFVIRDHIGVTPLENLSATIMADLTKIWHSLSKPQGLELSKITDFFDFMFTTLPHKILQPAEFDKAVDVLRNRFVNPKDPNFVFKTEYHKRIPADGLAHYLESIWEQVMTNKDLDLPTQQELLAQFRCDEIANVAFAHFATSIKDFRKHIEGGSVVESLGADMALHRSTALSKFDRDASRYHQEVYKRKRIDLLDKLNGSLSPFFLGQLKNLHRLMLQSFKQAVLDRMRTEPNYDFGEVVSSEKRTALAKFSAAAQAVLLTDTDWTIDDEVVELDVEIQSISDTMRVEETKKMVAQIERTFNKNIGEPVELALKSAKRSMWDEVLISFSTLLEQAEATYVRKATSFNCTDDENEHALLALRRKSWMSMRAKVDEQTADSVIAAKLRNSFEDGFRYDDAGVPRVWKPEDDMDGAFRKARDETLELIALYAKIQAVDTTLMRELRSKFEDAEPVGLVVEDEAFDWHATLSVLSETRKNDIGMRFRKEADAMYVEAKRATVSSIAQVPLWMYGVMLVLGWNELMAILSSPVYFAFLLVLIASAYIVWRLNLSGPLISVLRAVANEVHRLADAQLRTHFSQPLREPRPPAESRPAEQIELEPN.

Positions 1 to 29 (MELNVDSAKQLLAEHEQELQSAHDAHSIL) form a coiled coil. At 1–749 (MELNVDSAKQ…KRATVSSIAQ (749 aa)) the chain is on the cytoplasmic side. Positions 112–334 (GFGYDLCAVL…DPNFVFKTEY (223 aa)) constitute a GB1/RHD3-type G domain. 122 to 129 (GSQSTGKS) provides a ligand contact to GTP. Residues 750–770 (VPLWMYGVMLVLGWNELMAIL) form a helical membrane-spanning segment. Over 771–773 (SSP) the chain is Lumenal. Residues 774–794 (VYFAFLLVLIASAYIVWRLNL) form a helical membrane-spanning segment. The Cytoplasmic portion of the chain corresponds to 795–845 (SGPLISVLRAVANEVHRLADAQLRTHFSQPLREPRPPAESRPAEQIELEPN). The segment at 823–845 (QPLREPRPPAESRPAEQIELEPN) is disordered. Over residues 826–838 (REPRPPAESRPAE) the composition is skewed to basic and acidic residues.

The protein belongs to the TRAFAC class dynamin-like GTPase superfamily. GB1/RHD3 GTPase family. RHD3 subfamily.

The protein resides in the endoplasmic reticulum membrane. Cooperates with the reticulon proteins and tubule-shaping DP1 family proteins to generate and maintain the structure of the tubular endoplasmic reticulum network. Has GTPase activity, which is required for its function in ER organization. In Mycosarcoma maydis (Corn smut fungus), this protein is Protein SEY1.